Reading from the N-terminus, the 259-residue chain is Phosphatidylglycerol--prolipoprotein diacylglyceryl transferase (259 aa).

The next 4 helical transmembrane spans lie at 9–29, 55–75, 92–112, and 117–137; these read IIFS…VVGI, FITY…VLLY, EGGM…YLFC, and INFL…LFLG. Arg-138 is an a 1,2-diacyl-sn-glycero-3-phospho-(1'-sn-glycerol) binding site. 3 helical membrane-spanning segments follow: residues 172 to 192, 201 to 221, and 228 to 248; these read QLYE…YAVF, GLNS…IEMF, and IGFI…MLLL.

This sequence belongs to the Lgt family.

Its subcellular location is the cell inner membrane. The enzyme catalyses L-cysteinyl-[prolipoprotein] + a 1,2-diacyl-sn-glycero-3-phospho-(1'-sn-glycerol) = an S-1,2-diacyl-sn-glyceryl-L-cysteinyl-[prolipoprotein] + sn-glycerol 1-phosphate + H(+). Its pathway is protein modification; lipoprotein biosynthesis (diacylglyceryl transfer). Catalyzes the transfer of the diacylglyceryl group from phosphatidylglycerol to the sulfhydryl group of the N-terminal cysteine of a prolipoprotein, the first step in the formation of mature lipoproteins. The polypeptide is Phosphatidylglycerol--prolipoprotein diacylglyceryl transferase (Rickettsia typhi (strain ATCC VR-144 / Wilmington)).